The primary structure comprises 354 residues: Thiamine thiazole synthase 1, chloroplastic (354 aa).

A chloroplast-targeting transit peptide spans 1–43; the sequence is MATTAASSLLKSSFAGSRLPSATRAPSSVVVSTGGAPRTAAIS. Residues Ala96, 116–117, Gly124, and Val190 contribute to the substrate site; that span reads EQ. Cys219 is modified (2,3-didehydroalanine (Cys)). Substrate-binding positions include Asp221, His236, Met288, and 298 to 300; that span reads RMG.

This sequence belongs to the THI4 family. Homooctamer. Requires Fe cation as cofactor. In terms of processing, during the catalytic reaction, a sulfide is transferred from Cys-219 to a reaction intermediate, generating a dehydroalanine residue.

Its subcellular location is the plastid. The protein localises to the chloroplast. The enzyme catalyses [ADP-thiazole synthase]-L-cysteine + glycine + NAD(+) = [ADP-thiazole synthase]-dehydroalanine + ADP-5-ethyl-4-methylthiazole-2-carboxylate + nicotinamide + 3 H2O + 2 H(+). In terms of biological role, involved in biosynthesis of the thiamine precursor thiazole. Catalyzes the conversion of NAD and glycine to adenosine diphosphate 5-(2-hydroxyethyl)-4-methylthiazole-2-carboxylic acid (ADT), an adenylated thiazole intermediate. The reaction includes an iron-dependent sulfide transfer from a conserved cysteine residue of the protein to a thiazole intermediate. The enzyme can only undergo a single turnover, which suggests it is a suicide enzyme. May have additional roles in adaptation to various stress conditions and in DNA damage tolerance. The sequence is that of Thiamine thiazole synthase 1, chloroplastic from Sorghum bicolor (Sorghum).